Here is a 367-residue protein sequence, read N- to C-terminus: Probable butyrate kinase (367 aa).

This sequence belongs to the acetokinase family.

Its subcellular location is the cytoplasm. It carries out the reaction butanoate + ATP = butanoyl phosphate + ADP. This Bacillus anthracis (strain A0248) protein is Probable butyrate kinase.